We begin with the raw amino-acid sequence, 222 residues long: Ribose-5-phosphate isomerase A (222 aa).

Residues 29 to 32, 82 to 85, and 95 to 98 each bind substrate; these read TGST, DSAD, and KGGG. The Proton acceptor role is filled by glutamate 104. Residue lysine 122 coordinates substrate.

The protein belongs to the ribose 5-phosphate isomerase family. As to quaternary structure, homodimer.

It catalyses the reaction aldehydo-D-ribose 5-phosphate = D-ribulose 5-phosphate. It functions in the pathway carbohydrate degradation; pentose phosphate pathway; D-ribose 5-phosphate from D-ribulose 5-phosphate (non-oxidative stage): step 1/1. Its function is as follows. Catalyzes the reversible conversion of ribose-5-phosphate to ribulose 5-phosphate. This chain is Ribose-5-phosphate isomerase A, found in Blochmanniella floridana.